Reading from the N-terminus, the 512-residue chain is MGELQFKWLFWRSFAESGGTFQTVLIFLFIPYSLTVDYRATPVLSDTTFVWVWNVPTEACVENVTEPIDLSFFSLIGSPRKTAIGQPVTLFYVDRLGNYPHIDAQQTEHHGGIPQKGDLTTHLVKAKEDVERYIPTDKLGLAIIDWEEWRPTWMRNWTPKDIYRNKSIELVQAADPAINITEATVRAKAQFEGAAKEFMEGTLKLGKHIRPKHLWGFYLFPDCYNNKFQVDNYDGQCPDVEKKRNDDLDWLWKESTGLYPSVYLKKDLKSSRKATLYVRYRVLESIRVSKVSDESNPVPIFVYIRLVFTDHVSEYLLEDDLVNTIGEIVAQGTSGIIIWDAMSLAQRSAGCPILRQYMKTTLNPYIVNVTLAAKMCSQTLCKEKGMCSRKTESSDAYLHLDPSSFSINVTEAGKYEVLGKPEVKDLEYFSEHFKCSCFSKMTCEETSDMRSIQDVNVCMGDNVCIKATLGPNSAFHLLPGKGLLLMTTLAHILHHLPHDIFVFPWKMLVSTP.

The first 35 residues, 1 to 35 (MGELQFKWLFWRSFAESGGTFQTVLIFLFIPYSLT), serve as a signal peptide directing secretion. Intrachain disulfides connect Cys60-Cys351 and Cys223-Cys237. A glycan (N-linked (GlcNAc...) asparagine) is linked at Asn63. Glu147 serves as the catalytic Proton donor. N-linked (GlcNAc...) asparagine glycosylation is found at Asn165 and Asn179. N-linked (GlcNAc...) asparagine glycosylation occurs at Asn368. Disulfide bonds link Cys376–Cys387, Cys381–Cys435, and Cys437–Cys464. Asn408 carries an N-linked (GlcNAc...) asparagine glycan.

The protein belongs to the glycosyl hydrolase 56 family.

The protein localises to the cell membrane. It catalyses the reaction Random hydrolysis of (1-&gt;4)-linkages between N-acetyl-beta-D-glucosamine and D-glucuronate residues in hyaluronate.. In terms of biological role, involved in sperm-egg adhesion. Upon fertilization sperm must first penetrate a layer of cumulus cells that surrounds the egg before reaching the zona pellucida. The cumulus cells are embedded in a matrix containing hyaluronic acid which is formed prior to ovulation. This protein aids in penetrating the layer of cumulus cells by digesting hyaluronic acid. The protein is Hyaluronidase PH-20 (Spam1) of Rattus norvegicus (Rat).